We begin with the raw amino-acid sequence, 311 residues long: Dihydroorotate dehydrogenase A (fumarate) (311 aa).

FMN-binding positions include S19 and 43–44; that span reads KS. Residues K43, 67 to 71, and N127 contribute to the substrate site; that span reads NSMGL. N127 provides a ligand contact to FMN. C130 (nucleophile) is an active-site residue. The FMN site is built by K164 and V192. 193-194 contacts substrate; the sequence is NS. FMN-binding positions include G221, 249–250, and 271–272; these read GG and GT.

The protein belongs to the dihydroorotate dehydrogenase family. Type 1 subfamily. As to quaternary structure, homodimer. FMN serves as cofactor.

The protein localises to the cytoplasm. It catalyses the reaction (S)-dihydroorotate + fumarate = orotate + succinate. The protein operates within pyrimidine metabolism; UMP biosynthesis via de novo pathway. Functionally, catalyzes the conversion of dihydroorotate to orotate with fumarate as the electron acceptor. The protein is Dihydroorotate dehydrogenase A (fumarate) (pyrDA) of Lactococcus lactis subsp. lactis (strain IL1403) (Streptococcus lactis).